The chain runs to 457 residues: L-asparaginase-like protein GA18140 (457 aa).

The first 20 residues, 1–20, serve as a signal peptide directing secretion; sequence MRYLCRAQLLSLLLLPLLKA. 3 disulfides stabilise this stretch: Cys-72-Cys-78, Cys-172-Cys-188, and Cys-327-Cys-354.

It belongs to the Ntn-hydrolase family.

The polypeptide is L-asparaginase-like protein GA18140 (Drosophila pseudoobscura pseudoobscura (Fruit fly)).